A 146-amino-acid polypeptide reads, in one-letter code: Large ribosomal subunit protein uL15 (146 aa).

Residues 1 to 58 (MNLSELRPAPGARKKPTRKGQGIGSGLGKTAGKGHKGQNARSGGGVRPGFEGGQMPLQ) are disordered. Gly residues-rich tracts occupy residues 21–31 (QGIGSGLGKTA) and 42–52 (SGGGVRPGFEG).

Belongs to the universal ribosomal protein uL15 family. In terms of assembly, part of the 50S ribosomal subunit.

Its function is as follows. Binds to the 23S rRNA. This is Large ribosomal subunit protein uL15 from Desulforamulus reducens (strain ATCC BAA-1160 / DSM 100696 / MI-1) (Desulfotomaculum reducens).